Reading from the N-terminus, the 520-residue chain is Cholesterol side-chain cleavage enzyme, mitochondrial (520 aa).

The N-terminal 39 residues, 1–39, are a transit peptide targeting the mitochondrion; it reads MLARGLPLRSALVKACPPLLNTGREGWGHHRVGTGEGAG. The interval 27–48 is disordered; sequence WGHHRVGTGEGAGISTRTPRPY. Residue C461 participates in heme binding.

The protein belongs to the cytochrome P450 family. In terms of assembly, interacts with FDX1/adrenodoxin. Requires heme as cofactor.

Its subcellular location is the mitochondrion inner membrane. The catalysed reaction is 6 reduced [adrenodoxin] + cholesterol + 3 O2 + 6 H(+) = 4-methylpentanal + pregnenolone + 6 oxidized [adrenodoxin] + 4 H2O. The enzyme catalyses 2 reduced [adrenodoxin] + cholesterol + O2 + 2 H(+) = (22R)-hydroxycholesterol + 2 oxidized [adrenodoxin] + H2O. It catalyses the reaction (22R)-hydroxycholesterol + 2 reduced [adrenodoxin] + O2 + 2 H(+) = (20R,22R)-20,22-dihydroxycholesterol + 2 oxidized [adrenodoxin] + H2O. It carries out the reaction (20R,22R)-20,22-dihydroxycholesterol + 2 reduced [adrenodoxin] + O2 + 2 H(+) = 4-methylpentanal + pregnenolone + 2 oxidized [adrenodoxin] + 2 H2O. Its pathway is lipid metabolism; C21-steroid hormone metabolism. It functions in the pathway steroid metabolism; cholesterol metabolism. A cytochrome P450 monooxygenase that catalyzes the side-chain hydroxylation and cleavage of cholesterol to pregnenolone, the precursor of most steroid hormones. Catalyzes three sequential oxidation reactions of cholesterol, namely the hydroxylation at C22 followed with the hydroxylation at C20 to yield 20R,22R-hydroxycholesterol that is further cleaved between C20 and C22 to yield the C21-steroid pregnenolone and 4-methylpentanal. Mechanistically, uses molecular oxygen inserting one oxygen atom into a substrate and reducing the second into a water molecule. Two electrons are provided by NADPH via a two-protein mitochondrial transfer system comprising flavoprotein FDXR (adrenodoxin/ferredoxin reductase) and nonheme iron-sulfur protein FDX1 or FDX2 (adrenodoxin/ferredoxin). The chain is Cholesterol side-chain cleavage enzyme, mitochondrial from Capra hircus (Goat).